Consider the following 476-residue polypeptide: Protein transport protein Sec61 subunit alpha-like 2 (476 aa).

Over 2-33 (AIKFLEVIKPFCAVLPEIQKPERRIQFKEKVL) the chain is Cytoplasmic. The helical transmembrane segment at 34-53 (WTAITLFIFLVCCQIPLFGI) threads the bilayer. Residues 54-76 (MSSDSADPFYWMRVIMASNRGTL) lie on the Lumenal side of the membrane. A helical transmembrane segment spans residues 77–96 (MELGISPIVTSGLIMQLLAG). Topologically, residues 97–117 (AKIIEVGDTPKDRALFNGAQK) are cytoplasmic. The chain crosses the membrane as a helical span at residues 118-138 (LFGMIITIGQAVVYVMTGMYG). At 139-144 (DPSEMG) the chain is on the lumenal side. The chain crosses the membrane as a helical span at residues 145-165 (AGICLLIIIQLFVAGLIVLLL). Residues 166 to 172 (DELLQKG) are Cytoplasmic-facing. The helical transmembrane segment at 173–193 (YGLGSGISLFIATNICETIVW) threads the bilayer. At 194–240 (KAFSPTTVNTGRGTEFEGAIIALFHLLATRTDKVRALREAFYRQNLP) the chain is on the lumenal side. The chain crosses the membrane as a helical span at residues 241-261 (NLMNLIATIFVFAVVIYFQGF). Over 262–288 (RVDLPIKSARYRGQYNTYPIKLFYTSN) the chain is Cytoplasmic. The helical transmembrane segment at 289–309 (IPIILQSALVSNLYVISQMLS) threads the bilayer. At 310–354 (TRFSGNFLVNLLGTWSDTSTGGPARAYPVGGLCYYLSPPESFGTV) the chain is on the lumenal side. The chain crosses the membrane as a helical span at residues 355–375 (LEDPIHAIIYIIFMLGSCAFF). Over 376–420 (SKTWIEVSGSSAKDVAKQLKEQQMVMRGHRETSMVHELNRYIPTA) the chain is Cytoplasmic. A helical transmembrane segment spans residues 421–441 (AAFGGLCIGGLSVMADFLGAI). The Lumenal segment spans residues 442 to 445 (GSGT). The chain crosses the membrane as a helical span at residues 446–462 (GILLAVTIIYQYFEIFV). Topologically, residues 463-476 (KEQSEVGSVGALLF) are cytoplasmic.

The protein belongs to the SecY/SEC61-alpha family. As to quaternary structure, the SEC61 channel-forming translocon complex consists of channel-forming core components SEC61A1, SEC61B and SEC61G and different auxiliary components such as SEC62 and SEC63.

It localises to the endoplasmic reticulum membrane. Its function is as follows. Component of SEC61 channel-forming translocon complex that mediates transport of signal peptide-containing precursor polypeptides across the endoplasmic reticulum (ER). Forms a ribosome receptor and a gated pore in the ER membrane, both functions required for cotranslational translocation of nascent polypeptides. This chain is Protein transport protein Sec61 subunit alpha-like 2 (sec61al2), found in Danio rerio (Zebrafish).